The primary structure comprises 299 residues: Acidic endochitinase Pun g 14, amyloplastic (299 aa).

The N-terminal 26 residues, 1-26 (MAKTLPFSRALLLSLSILLVARAISA), are a transit peptide targeting the amyloplast. The region spanning 27-299 (GDIAIYWGQN…TYSTTIKDQV (273 aa)) is the GH18 domain. Intrachain disulfides connect Cys-46/Cys-93 and Cys-76/Cys-83. Glu-153 (proton donor) is an active-site residue. Cys-185 and Cys-216 are oxidised to a cystine.

Belongs to the glycosyl hydrolase 18 family. Chitinase class III subfamily. In terms of assembly, monomer. Highly expressed in seeds and to a lesser extent in the skin of the pomegranate fruit (at protein level). Not expressed in leaves or flesh of the fruit (at protein level).

Its subcellular location is the plastid. It is found in the amyloplast. It catalyses the reaction Random endo-hydrolysis of N-acetyl-beta-D-glucosaminide (1-&gt;4)-beta-linkages in chitin and chitodextrins.. Its activity is regulated as follows. Activity is not affected by addition of 10 mM Ca(2+) or removal of Ca(2+). In terms of biological role, hydrolyzes chitin. Probable calcium storage protein of the seeds. Binds calcium ions with high capacity and low affinity. Involved in seed germination. The protein is Acidic endochitinase Pun g 14, amyloplastic of Punica granatum (Pomegranate).